A 93-amino-acid chain; its full sequence is Putative defensin-like protein 283 (93 aa).

An N-terminal signal peptide occupies residues 1-24 (MTKIGFYLATYATIYIILSPGLLA). Disulfide bonds link cysteine 43/cysteine 83, cysteine 66/cysteine 90, and cysteine 72/cysteine 92.

This sequence belongs to the DEFL family.

It is found in the secreted. The chain is Putative defensin-like protein 283 from Arabidopsis thaliana (Mouse-ear cress).